Consider the following 184-residue polypeptide: Alpha-tubulin N-acetyltransferase (184 aa).

The region spanning 1–174 (MDTHGEKMKN…NNFVIFAEYF (174 aa)) is the N-acetyltransferase domain. Acetyl-CoA is bound by residues 108–121 (FYIR…GLGL) and 144–153 (SHKLRSFLKK).

It belongs to the acetyltransferase ATAT1 family.

The enzyme catalyses L-lysyl-[alpha-tubulin] + acetyl-CoA = N(6)-acetyl-L-lysyl-[alpha-tubulin] + CoA + H(+). In terms of biological role, specifically acetylates 'Lys-40' in alpha-tubulin on the lumenal side of microtubules. Promotes microtubule destabilization and accelerates microtubule dynamics; this activity may be independent of acetylation activity. Acetylates alpha-tubulin with a slow enzymatic rate, due to a catalytic site that is not optimized for acetyl transfer. Enters the microtubule through each end and diffuses quickly throughout the lumen of microtubules. Acetylates only long/old microtubules because of its slow acetylation rate since it does not have time to act on dynamically unstable microtubules before the enzyme is released. The polypeptide is Alpha-tubulin N-acetyltransferase (Plasmodium vivax (strain Salvador I)).